The following is a 255-amino-acid chain: 14-3-3 protein epsilon (255 aa).

The residue at position 1 (Met-1) is an N-acetylmethionine. Lys-50 is subject to N6-acetyllysine; alternate. Lys-50 participates in a covalent cross-link: Glycyl lysine isopeptide (Lys-Gly) (interchain with G-Cter in SUMO2); alternate. At Ser-65 the chain carries Phosphoserine. N6-acetyllysine is present on residues Lys-69, Lys-118, and Lys-123. Tyr-131 is modified (phosphotyrosine). At Thr-137 the chain carries Phosphothreonine. Ser-210 bears the Phosphoserine mark. Residue Thr-232 is modified to Phosphothreonine. The segment at Asp-234–Gln-255 is disordered.

Belongs to the 14-3-3 family. In terms of assembly, homodimer. Heterodimerizes with YWHAZ. Interacts with PKA-phosphorylated AANAT. Interacts with ABL1 (phosphorylated form); the interaction retains it in the cytoplasm. Interacts with ARHGEF28. Interacts with BEX3. Weakly interacts with CDKN1B. Interacts with the 'Thr-369' phosphorylated form of DAPK2. Interacts with DENND1A. Interacts with GAB2. Interacts with phosphorylated GRB10. Interacts with KSR1. Interacts with NDEL1. Interacts with PI4KB, TBC1D22A and TBC1D22B. Interacts with the phosphorylated (by AKT1) form of SRPK2. Interacts with TIAM2. Interacts with the 'Ser-1134' and 'Ser-1161' phosphorylated form of SOS1. Interacts with ZFP36 (via phosphorylated form). Interacts with SLITRK1. Interacts with HSF1 (via phosphorylated form); this interaction promotes HSF1 sequestration in the cytoplasm in a ERK-dependent manner. Interacts with RIPOR2. Interacts with KLHL22; required for the nuclear localization of KLHL22 upon amino acid starvation. Interacts with CRTC1. Interacts with CRTC2 (probably when phosphorylated at 'Ser-171'). Interacts with CRTC3 (probably when phosphorylated at 'Ser-162' and/or 'Ser-273'). Interacts with ATP2B1 and ATP2B3; this interaction inhibits calcium-transporting ATPase activity. Interacts with MEFV. Interacts with RNF115. Interacts with GPR15; this interaction promotes ER-to-Golgi transport of GPR15.

The protein localises to the nucleus. It localises to the cytoplasm. It is found in the melanosome. Adapter protein implicated in the regulation of a large spectrum of both general and specialized signaling pathways. Binds to a large number of partners, usually by recognition of a phosphoserine or phosphothreonine motif. Binding generally results in the modulation of the activity of the binding partner. Positively regulates phosphorylated protein HSF1 nuclear export to the cytoplasm. This chain is 14-3-3 protein epsilon (Ywhae), found in Rattus norvegicus (Rat).